We begin with the raw amino-acid sequence, 909 residues long: Golgin subfamily A member 6-like protein 2 (909 aa).

The span at 1 to 11 (MWPQPHLPPHP) shows a compositional bias: pro residues. 5 disordered regions span residues 1 to 88 (MWPQ…ASHQ), 300 to 362 (ERLR…EQEE), 381 to 408 (QEKQ…RLRE), 425 to 494 (KMRE…QRLP), and 524 to 909 (EEMW…QSSL). The segment covering 13–31 (MSEKTRQNKLAEAKKKFTD) has biased composition (basic and acidic residues). Polar residues predominate over residues 53 to 77 (NNGTNPETTTSEGCHSPEDTQQNRA). Basic and acidic residues predominate over residues 78–88 (QLKEEKKASHQ). Residues 192–526 (HKKADRYIEE…EEKIRDQEEM (335 aa)) are a coiled coil. 2 stretches are compositionally biased toward basic and acidic residues: residues 425–478 (KMRE…KQEE) and 524–542 (EEMW…MREQ). Residues 607–620 (AGGEEDAGAGEEDM) are compositionally biased toward acidic residues. Composition is skewed to gly residues over residues 641–654 (GGGG…GEDA) and 676–689 (GAGG…GEDV). The segment covering 692–719 (GRRRCGSSRGCRNRRRSCGNTRRCRSRR) has biased composition (basic residues). A compositionally biased stretch (low complexity) spans 746-755 (AGAEDVAAGG). A compositionally biased stretch (acidic residues) spans 757–766 (DAGEEEDAGG). Positions 791-871 (GAGGEDVGAG…AGGEDVGAGG (81 aa)) are enriched in gly residues. Basic and acidic residues predominate over residues 872–892 (DAREGGEDTRSEREDAGEAAR).

This sequence belongs to the GOLGA6 family.

The chain is Golgin subfamily A member 6-like protein 2 (GOLGA6L2) from Homo sapiens (Human).